The primary structure comprises 253 residues: Probable U3 small nucleolar RNA-associated protein 11 (253 aa).

The tract at residues 1 to 26 (MAAAFRKAAKSRQREHRERSQPGFRK) is disordered. Glycyl lysine isopeptide (Lys-Gly) (interchain with G-Cter in SUMO2) cross-links involve residues lysine 74, lysine 83, and lysine 86. A Phosphothreonine modification is found at threonine 90. Residues lysine 103, lysine 120, lysine 143, lysine 144, lysine 180, lysine 211, lysine 218, lysine 235, and lysine 236 each participate in a glycyl lysine isopeptide (Lys-Gly) (interchain with G-Cter in SUMO2) cross-link. Serine 241 is subject to Phosphoserine. Residue lysine 246 forms a Glycyl lysine isopeptide (Lys-Gly) (interchain with G-Cter in SUMO2) linkage.

This sequence belongs to the UTP11 family. Part of the small subunit (SSU) processome, composed of more than 70 proteins and the RNA chaperone small nucleolar RNA (snoRNA) U3.

It localises to the nucleus. It is found in the nucleolus. Functionally, part of the small subunit (SSU) processome, first precursor of the small eukaryotic ribosomal subunit. During the assembly of the SSU processome in the nucleolus, many ribosome biogenesis factors, an RNA chaperone and ribosomal proteins associate with the nascent pre-rRNA and work in concert to generate RNA folding, modifications, rearrangements and cleavage as well as targeted degradation of pre-ribosomal RNA by the RNA exosome. Involved in nucleolar processing of pre-18S ribosomal RNA. The chain is Probable U3 small nucleolar RNA-associated protein 11 from Homo sapiens (Human).